An 88-amino-acid chain; its full sequence is Anti-CBASS protein 2 (88 aa).

Tyr-8, Lys-9, His-11, Lys-23, Arg-79, and Phe-82 together coordinate 3',3'-cGAMP.

It belongs to the Acb2 family. Homohexamer when bound to 3',3'-cGAMP.

Its function is as follows. Antagonizes CBASS (cyclic oligonucleotide-based antiphage signaling system). Binds and sequesters host-produced 3',3'-cyclic GMP-AMP (cGAMP) with a dissociation constant of about 30 nM; each homohexamer binds 3 cGAMP molecules with 1 cGAMP molecule binding to 2 monomers. Sequestration of cGAMP inhibits the cGAMP-activated phospholipase activity of host CBASS effector protein CapV. The protein is Anti-CBASS protein 2 of Enterobacteria phage T4 (Bacteriophage T4).